Consider the following 291-residue polypeptide: 3-hydroxy-5-phosphonooxypentane-2,4-dione thiolase (291 aa).

The Schiff-base intermediate with substrate role is filled by K203.

It belongs to the DeoC/FbaB aldolase family. As to quaternary structure, homodecamer.

The protein resides in the cytoplasm. The catalysed reaction is dihydroxyacetone phosphate + acetyl-CoA = 3-hydroxy-2,4-dioxopentyl phosphate + CoA. In terms of biological role, involved in the degradation of phospho-AI-2, thereby terminating induction of the lsr operon and closing the AI-2 signaling cycle. Catalyzes the transfer of an acetyl moiety from 3-hydroxy-5-phosphonooxypentane-2,4-dione to CoA to form glycerone phosphate and acetyl-CoA. This chain is 3-hydroxy-5-phosphonooxypentane-2,4-dione thiolase, found in Yersinia enterocolitica serotype O:8 / biotype 1B (strain NCTC 13174 / 8081).